Reading from the N-terminus, the 317-residue chain is MTTALDQLKQYTTVVADTGDFQQLAQYKPQDATTNPSLILKAVQKDAYKPILEKTVRDHRNESTDFIIDRLLIAFGTEILKLIPGRVSTEVDARLSFDTQRSIDKGRELIKLYEAAGVGRERILIKLASTWEGIRAAEVLQKEGIKCNMTLLFSLVQAAACAEAGAQLISPFVGRIYDWYKKQAGADWNEARDGGANDPGVQSVRRIYTYYKTFGYKTEVMGASFRTTSQIIELAGCDLLTISPDLLQKLQESNDTVARKLSPDTLQDKPAERVAIDEASFRFQLNDEAMATEKLAEGIRVFAADAVKLEKLIDALR.

Lys-126 serves as the catalytic Schiff-base intermediate with substrate.

This sequence belongs to the transaldolase family. Type 1 subfamily. As to quaternary structure, homodimer.

The protein localises to the cytoplasm. The enzyme catalyses D-sedoheptulose 7-phosphate + D-glyceraldehyde 3-phosphate = D-erythrose 4-phosphate + beta-D-fructose 6-phosphate. It participates in carbohydrate degradation; pentose phosphate pathway; D-glyceraldehyde 3-phosphate and beta-D-fructose 6-phosphate from D-ribose 5-phosphate and D-xylulose 5-phosphate (non-oxidative stage): step 2/3. Functionally, transaldolase is important for the balance of metabolites in the pentose-phosphate pathway. The protein is Transaldolase of Burkholderia cenocepacia (strain ATCC BAA-245 / DSM 16553 / LMG 16656 / NCTC 13227 / J2315 / CF5610) (Burkholderia cepacia (strain J2315)).